A 78-amino-acid polypeptide reads, in one-letter code: Pro-glucagon (78 aa).

This sequence belongs to the glucagon family.

Its subcellular location is the secreted. Plays a key role in glucose metabolism and homeostasis. Regulates blood glucose by increasing gluconeogenesis and decreasing glycolysis. This Atractosteus spatula (Alligator gar) protein is Pro-glucagon (gcg).